The sequence spans 503 residues: Putative (R)-citramalate synthase CimA (503 aa).

In terms of domain architecture, Pyruvate carboxyltransferase spans 9 to 257 (IRFFDTTLRD…DTGIATEELY (249 aa)).

This sequence belongs to the alpha-IPM synthase/homocitrate synthase family. In terms of assembly, homodimer.

It catalyses the reaction pyruvate + acetyl-CoA + H2O = (3R)-citramalate + CoA + H(+). Its pathway is amino-acid biosynthesis; L-isoleucine biosynthesis; 2-oxobutanoate from pyruvate: step 1/3. Catalyzes the condensation of pyruvate and acetyl-coenzyme A to form (R)-citramalate. The sequence is that of Putative (R)-citramalate synthase CimA from Methanoculleus marisnigri (strain ATCC 35101 / DSM 1498 / JR1).